The primary structure comprises 397 residues: Serpin B10 (397 aa).

A Nuclear localization signal motif is present at residues 74–77; that stretch reads KKRK.

This sequence belongs to the serpin family. Ov-serpin subfamily.

It localises to the nucleus. The protein localises to the cytoplasm. Protease inhibitor that may play a role in the regulation of protease activities during hematopoiesis and apoptosis induced by TNF. May regulate protease activities in the cytoplasm and in the nucleus. In Otolemur garnettii (Small-eared galago), this protein is Serpin B10 (SERPINB10).